The sequence spans 355 residues: Homeobox protein knotted-1-like LET6 (355 aa).

Residues 75 to 96 are disordered; it reads PFMDNNNNNNPQEDNNSSSSSI. A compositionally biased stretch (low complexity) spans 79 to 96; it reads NNNNNNPQEDNNSSSSSI. Residues 237-257 enclose the ELK domain; the sequence is ELKGQLLRKYSGYLGSLKQEF. A DNA-binding region (homeobox; TALE-type) is located at residues 258–321; sequence MKKRKKGKLP…NQRKRHWKPS (64 aa).

The protein belongs to the TALE/KNOX homeobox family. Expressed in developing lateral organs and developing ovaries in flowers.

Its subcellular location is the nucleus. May have a role to play in formative events in ovule and embryo morphogenesis. Probably binds to the DNA sequence 5'-TGAC-3'. This Solanum lycopersicum (Tomato) protein is Homeobox protein knotted-1-like LET6 (LET6).